The sequence spans 389 residues: Anhydro-N-acetylmuramic acid kinase (389 aa).

Residue 11–18 (GTSLDGVD) participates in ATP binding.

Belongs to the anhydro-N-acetylmuramic acid kinase family.

It catalyses the reaction 1,6-anhydro-N-acetyl-beta-muramate + ATP + H2O = N-acetyl-D-muramate 6-phosphate + ADP + H(+). Its pathway is amino-sugar metabolism; 1,6-anhydro-N-acetylmuramate degradation. It functions in the pathway cell wall biogenesis; peptidoglycan recycling. Its function is as follows. Catalyzes the specific phosphorylation of 1,6-anhydro-N-acetylmuramic acid (anhMurNAc) with the simultaneous cleavage of the 1,6-anhydro ring, generating MurNAc-6-P. Is required for the utilization of anhMurNAc either imported from the medium or derived from its own cell wall murein, and thus plays a role in cell wall recycling. This is Anhydro-N-acetylmuramic acid kinase from Albidiferax ferrireducens (strain ATCC BAA-621 / DSM 15236 / T118) (Rhodoferax ferrireducens).